The primary structure comprises 289 residues: MRKFTAFACGTIAGLSAYYIQRLNDPQLRVHNSWTNSETPISDCALWNSNWDFRDPKSLVRPLKNDNPQEQNRYNSELEKHVPKKARHIILIRHGEYLDVGDTDDSHHLTDRGRQQAKYTGQRLHELGITWDKVIASNMVRAQETADIILNEIDYDKANVKNCPFLREGAPIPPQPPVGHWKPEGSQFFRDGARIEAAFRRYFHRAYPEQEKESYTLIVGHGNVIRYFVCRALQFPAEAWLRISINHASITWLTISASGNVSIKYLGDSGFLPAKLLTNRIPRDAKNVV.

Belongs to the phosphoglycerate mutase family. BPG-dependent PGAM subfamily. Interacts with Pk92B/ASK1.

It localises to the mitochondrion outer membrane. The catalysed reaction is O-phospho-L-seryl-[protein] + H2O = L-seryl-[protein] + phosphate. It catalyses the reaction O-phospho-L-threonyl-[protein] + H2O = L-threonyl-[protein] + phosphate. Functionally, displays phosphatase activity for serine/threonine residues, and dephosphorylates and activates Pk92B kinase. Has apparently no phosphoglycerate mutase activity. The sequence is that of Serine/threonine-protein phosphatase Pgam5, mitochondrial from Drosophila grimshawi (Hawaiian fruit fly).